We begin with the raw amino-acid sequence, 2664 residues long: Inositol 1,4,5-trisphosphate-gated calcium channel ITPR3 (2664 aa).

Topologically, residues 1–2227 are cytoplasmic; it reads MSEMSSFLHI…YVEGASTGVL (2227 aa). MIR domains follow at residues 113-173, 174-224, 232-288, 295-372, and 378-434; these read GDVV…LRSN, GDNV…INLF, EEVL…VEVV, GGAG…LDPT, and DSFV…IVSV. Residues Arg-266, Thr-268, Leu-269, and Arg-270 each contribute to the 1D-myo-inositol 1,4,5-trisphosphate site. A disordered region spans residues 320–344; the sequence is NPSYKGDASDPKAAGTGAQGRTGRR. 1D-myo-inositol 1,4,5-trisphosphate-binding residues include Arg-503, Lys-507, Arg-510, Tyr-567, Arg-568, and Lys-569. Residue Arg-743 participates in Ca(2+) binding. A phosphoserine mark is found at Ser-909 and Ser-927. Glu-1115 and Glu-1118 together coordinate Ca(2+). 2 disordered regions span residues 1124-1158 and 1790-1850; these read KGASKGEEGEAGPAKDKKERPTDEEGFLHPPGEKS and QQET…VGER. The span at 1792 to 1805 shows a compositional bias: polar residues; it reads ETKSTVAVNMSDLG. Phosphoserine is present on residues Ser-1806, Ser-1825, and Ser-1827. 2 residues coordinate Ca(2+): Glu-1875 and Glu-1939. 3 residues coordinate ATP: Ala-1989, Glu-2142, and Lys-2145. A helical membrane pass occupies residues 2228-2248; that stretch reads GSPLISLLFWILICFSIAALF. At 2249 to 2256 the chain is on the extracellular side; that stretch reads TKRYSVRP. A helical membrane pass occupies residues 2257–2277; it reads LIVALILRSIYYLGIGPTLNI. Residues 2278 to 2286 lie on the Cytoplasmic side of the membrane; the sequence is LGALNLTNK. A helical membrane pass occupies residues 2287-2304; the sequence is IVFVVSFVGNRGTFIRGY. The Extracellular segment spans residues 2305–2318; it reads KAMVMDMEFLYHVG. A helical transmembrane segment spans residues 2319–2339; that stretch reads YILTSVLGLFAHELFYSILLF. Residues 2340–2361 lie on the Cytoplasmic side of the membrane; sequence DLIYREETLFNVIKSVTRNGRS. A helical membrane pass occupies residues 2362–2382; that stretch reads ILLTALLALILVYLFSIVGFL. Over 2383–2489 the chain is Extracellular; that stretch reads FLKDDFILEV…ESLFPARVVY (107 aa). Cys-2448 and Cys-2454 are oxidised to a cystine. A helical membrane pass occupies residues 2490–2510; that stretch reads DLLFFFIVIIIVLNLIFGVII. Residues 2511–2664 lie on the Cytoplasmic side of the membrane; sequence DTFADLRSEK…FVDVQNCMSR (154 aa). Positions 2531 and 2532 each coordinate ATP. Cys-2531 contacts Zn(2+). The Zn(2+) site is built by Cys-2534 and His-2551. ATP-binding residues include Lys-2553, His-2556, Asn-2557, and Met-2558. A Zn(2+)-binding site is contributed by His-2556. Thr-2574 lines the Ca(2+) pocket. Ser-2602 and Ser-2663 each carry phosphoserine.

The protein belongs to the InsP3 receptor family. As to quaternary structure, homotetramer. Homodimer. Interacts with TRPC1, TRPC3 and TRPC4. Interacts with TRPV4. Interacts with SIGMAR1. Interacts with PML and AKT1. Interacts with IRAG2 (via coiled-coil domain). Interacts with CABP1. Interacts with TMBIM4/LFG4. Interacts with CEMIP. Interacts with TESPA1. Interacts with TMEM203. Interacts with BOK; regulates ITPR3 expression. Interacts with BCL2L10. Interacts with CHGA and CHGB. In terms of processing, phosphorylated by AKT1 on serine and/or threonine residues.

The protein localises to the endoplasmic reticulum membrane. The protein resides in the cytoplasmic vesicle. It is found in the secretory vesicle membrane. The enzyme catalyses Ca(2+)(in) = Ca(2+)(out). Its activity is regulated as follows. Inositol 1,4,5-trisphosphate-gated calcium channel is regulated by cytosolic calcium in a biphasic manner. At low concentrations, cytosolic calcium binds at a high-affinity juxtamembrane domain (JD) calcium binding site, allowing ITPR3 to activate by escaping a low-energy resting state through an ensemble of preactivated states. At high cytosolic calcium concentrations, ITPR3 preferentially enters an inhibited state stabilized by calcium binding at a second, low-affinity cytoplasmic domain (CD) calcium binding site. In terms of biological role, inositol 1,4,5-trisphosphate-gated calcium channel that, upon 1D-myo-inositol 1,4,5-trisphosphate binding, transports calcium from the endoplasmic reticulum lumen to cytoplasm, thus releasing the intracellular calcium and therefore participates in cellular calcium ion homeostasis. 1D-myo-inositol 1,4,5-trisphosphate binds to the ligand-free channel without altering its global conformation, yielding the low-energy resting state, then progresses through resting-to preactivated transitions to the higher energy preactivated state, which increases affinity for calcium, promoting binding of the low basal cytosolic calcium at the juxtamembrane domain (JD) site, favoring the transition through the ensemble of high-energy intermediate states along the trajectory to the fully-open activated state. Upon opening, releases calcium in the cytosol where it can bind to the low-affinity cytoplasmic domain (CD) site and stabilizes the inhibited state to terminate calcium release. In Bos taurus (Bovine), this protein is Inositol 1,4,5-trisphosphate-gated calcium channel ITPR3.